Consider the following 2643-residue polypeptide: BAH and coiled-coil domain-containing protein 1 (2643 aa).

2 disordered regions span residues 23–45 (SAAA…HFQP) and 84–106 (SAAS…RGSH). Position 220 is an N6-acetyllysine (K220). Basic and acidic residues-rich tracts occupy residues 224–249 (KEKV…DRQK) and 683–702 (ERPD…DGEV). Disordered regions lie at residues 224 to 273 (KEKV…SCEG), 674 to 704 (PATK…EVRQ), 721 to 758 (GRPD…LESE), 985 to 1023 (RKPE…PSSA), and 1038 to 1299 (TLKT…KALP). The segment covering 985–1003 (RKPEDRHMELEEAAQEKTP) has biased composition (basic and acidic residues). The segment covering 1133 to 1149 (RPEPPRTFLPGEPPPCS) has biased composition (pro residues). Residues 1210-1224 (ATGQTNSTQGGMQNE) show a composition bias toward polar residues. Positions 1269–1284 (QEEETQLEESGGDSEV) are enriched in acidic residues. 2 coiled-coil regions span residues 1346–1373 (ALLS…DVLA) and 1437–1486 (LKAA…SSRS). Residues 1466–1484 (QRELARLQRRHDHEREESS) show a composition bias toward basic and acidic residues. Disordered stretches follow at residues 1466–1520 (QREL…DSKK), 1537–1559 (GDEP…QSVS), 1604–1641 (KEAA…GREM), 1746–1781 (RAPG…SRDT), 1875–1896 (FDED…GVQL), 2055–2124 (SSCR…HFLG), 2322–2341 (CPSS…TGVP), and 2349–2386 (SMSS…SDDE). Basic residues predominate over residues 1487-1501 (PARRGPGRPRKRKHS). Over residues 1631–1641 (PHPDGDSGREM) the composition is skewed to basic and acidic residues. Over residues 1757–1767 (GKKKAKGKVKT) the composition is skewed to basic residues. The segment covering 1875 to 1892 (FDEDDTSFSDEEEEEEEA) has biased composition (acidic residues). Over residues 2349-2374 (SMSSSSSGSSTSSSSGSVSTSSLCSS) the composition is skewed to low complexity. Acidic residues predominate over residues 2375 to 2386 (DNEDSSYSSDDE). In terms of domain architecture, BAH spans 2517 to 2637 (ETLRIGDCAV…PTTGRLVTAD (121 aa)).

This chain is BAH and coiled-coil domain-containing protein 1 (Bahcc1), found in Mus musculus (Mouse).